We begin with the raw amino-acid sequence, 246 residues long: mRNA-decapping protein g5R (246 aa).

Residues 93 to 239 form the Nudix hydrolase domain; sequence QKFRKNWLLP…IIGPAFNFIK (147 aa). The Nudix box motif lies at 128–149; the sequence is GKPKEDESDLTCAIREFEEETG. Residue E134 participates in Mg(2+) binding. E143 (nucleophile) is an active-site residue. E147 and D169 together coordinate Mg(2+).

Belongs to the Nudix hydrolase family. DIPP subfamily. Interacts with host RPL23A. Mg(2+) serves as cofactor. It depends on Mn(2+) as a cofactor.

It localises to the host rough endoplasmic reticulum. It carries out the reaction diphospho-myo-inositol polyphosphate + H2O = myo-inositol polyphosphate + phosphate.. Decapping enzyme required for the removal of the 5'-end m7GpppN cap tethered to viral and host mRNAs to allow their decay in cells. May therefore accelerate viral and cellular mRNA turnover to eliminate competing host mRNAs and allow stage-specific synthesis of viral proteins. Acceleration of the turnover of cellular transcripts may even promote the shutoff of host protein synthesis. In addition to the mRNA cap, g5R also efficiently hydrolyzes diphosphoinositol polyphosphates. Down-regulation of the level of PP-InsP5 (diphosphoinositol pentakisphosphate) may play a role in viral manipulation of the cellular secretory pathway, a step necessary for the formation of virions. Binds viral and cellular poly(A) mRNAs, thereby decreasing both types of mRNAs. The protein is mRNA-decapping protein g5R of African swine fever virus (isolate Warthog/Namibia/Wart80/1980) (ASFV).